Consider the following 210-residue polypeptide: Small ribosomal subunit protein uS5 (210 aa).

Positions 1 to 11 (MTQPNTQTTPN) are enriched in polar residues. A disordered region spans residues 1–56 (MTQPNTQTTPNDVPAAAEGQHQEQQQQQRRGGGRERRGGGRRGDRRGQERDSEWQE). Residues 18–29 (EGQHQEQQQQQR) are compositionally biased toward low complexity. The span at 32–56 (GGRERRGGGRRGDRRGQERDSEWQE) shows a compositional bias: basic and acidic residues. The 64-residue stretch at 54 to 117 (WQERVVQIRR…ADGKKHLVKV (64 aa)) folds into the S5 DRBM domain.

The protein belongs to the universal ribosomal protein uS5 family. Part of the 30S ribosomal subunit. Contacts proteins S4 and S8.

With S4 and S12 plays an important role in translational accuracy. Its function is as follows. Located at the back of the 30S subunit body where it stabilizes the conformation of the head with respect to the body. In Prochlorococcus marinus (strain MIT 9303), this protein is Small ribosomal subunit protein uS5.